The sequence spans 97 residues: YcgL domain-containing protein Avin_32960 (97 aa).

One can recognise a YcgL domain in the interval Cys3–Pro87.

The polypeptide is YcgL domain-containing protein Avin_32960 (Azotobacter vinelandii (strain DJ / ATCC BAA-1303)).